The following is a 68-amino-acid chain: Large ribosomal subunit protein bL32 (68 aa).

The protein belongs to the bacterial ribosomal protein bL32 family.

The chain is Large ribosomal subunit protein bL32 from Cereibacter sphaeroides (strain ATCC 17025 / ATH 2.4.3) (Rhodobacter sphaeroides).